The chain runs to 239 residues: Cysteine-rich venom protein (239 aa).

Residues 1–19 (MIAFLVLPILAAVLQQSSG) form the signal peptide. Residues 39–166 (DLHNSLRRSV…EYKYFYVCQY (128 aa)) form the SCP domain. 8 disulfides stabilise this stretch: Cys-75–Cys-153, Cys-92–Cys-167, Cys-148–Cys-164, Cys-186–Cys-193, Cys-189–Cys-198, Cys-202–Cys-234, Cys-211–Cys-228, and Cys-219–Cys-232. The ShKT domain occupies 202–234 (CTHEDKFTNCKDLVKQGCNNNYLKTNCPASCSC).

Belongs to the CRISP family. As to expression, expressed by the venom gland.

Its subcellular location is the secreted. Blocks contraction of smooth muscle elicited by high potassium-induced depolarization, but does not block caffeine-stimulated contraction. May target voltage-gated calcium channels in smooth muscle. The chain is Cysteine-rich venom protein from Vipera berus (Common European adder).